We begin with the raw amino-acid sequence, 612 residues long: MPKLRSATSTQGRNMAGARALWRATGMKENDFGKPIIAVVNSFTQFVPGHVHLKDMGQLVAAEIEKAGGVAKEFNTIAVDDGIAMGHGGMLYSLPSRDLIADSVEYMVNAHCADAMVCISNCDKITPGMLMAAMRLNIPTIFVSGGPMEAGKTKLSDQLIRLDLVDAMIEAADPNVSDERIDAIERSACPTCGSCSGMFTANSMNCLTEALGLSLPGNGSMLATHADRKELFLKAGRQIVELCKRYYEQDDASVLPRSIGTFDAFENAMSLDIAMGGSSNTVLHLLAAAQEAGMDFKMEDIDRLSRKVPCLSKIAPNTNKYHMEDVHRAGGIMGLLGELDRAGLIHKNTHTVLGMSMGEQLDQYDIIRNQDEELHKFFRAGPAGIRTTQAFSQDCRWDTVDNDRVNGCIRNKENAISQEGGLAVLFGNLAEDGCIVKTAGVDESIWKFTGTAIVFESQEDAVAGILGGKVKEGHVVVIRYEGPKGGPGMQEMLYPTSYLKSMGLGKKCALLTDGRFSGGTSGLSIGHASPEAASGGAIGLVRDGDIINIDIPNRAINLEISNDELATRRAEQDQKGWQPANREREVSFALKVFGHFATSADKGAVRDKTLLK.

D81 provides a ligand contact to Mg(2+). C122 provides a ligand contact to [2Fe-2S] cluster. 2 residues coordinate Mg(2+): D123 and K124. K124 carries the post-translational modification N6-carboxylysine. C195 is a [2Fe-2S] cluster binding site. E491 is a binding site for Mg(2+). Residue S517 is the Proton acceptor of the active site.

Belongs to the IlvD/Edd family. As to quaternary structure, homodimer. [2Fe-2S] cluster serves as cofactor. Mg(2+) is required as a cofactor.

The catalysed reaction is (2R)-2,3-dihydroxy-3-methylbutanoate = 3-methyl-2-oxobutanoate + H2O. The enzyme catalyses (2R,3R)-2,3-dihydroxy-3-methylpentanoate = (S)-3-methyl-2-oxopentanoate + H2O. Its pathway is amino-acid biosynthesis; L-isoleucine biosynthesis; L-isoleucine from 2-oxobutanoate: step 3/4. It functions in the pathway amino-acid biosynthesis; L-valine biosynthesis; L-valine from pyruvate: step 3/4. Functions in the biosynthesis of branched-chain amino acids. Catalyzes the dehydration of (2R,3R)-2,3-dihydroxy-3-methylpentanoate (2,3-dihydroxy-3-methylvalerate) into 2-oxo-3-methylpentanoate (2-oxo-3-methylvalerate) and of (2R)-2,3-dihydroxy-3-methylbutanoate (2,3-dihydroxyisovalerate) into 2-oxo-3-methylbutanoate (2-oxoisovalerate), the penultimate precursor to L-isoleucine and L-valine, respectively. This is Dihydroxy-acid dehydratase from Haemophilus influenzae (strain PittGG).